The chain runs to 65 residues: Hainantoxin-X.2 (65 aa).

Positions M1–A20 are cleaved as a signal peptide. Positions E21–R37 are excised as a propeptide. 3 cysteine pairs are disulfide-bonded: C39/C56, C46/C59, and C55/C64.

This sequence belongs to the neurotoxin 36 family. 02 subfamily. Expressed by the venom gland.

The protein localises to the secreted. Its function is as follows. Reversibly blocks N-type calcium channels (Cav2.2/CACNA1B) in rat dorsal root ganglion cells. Elicits no toxic symptoms in either vertebrates or invertebrates during a period of 48 hours post-injection, when it was assayed in vivo by direct injection into mice and cockroaches. The sequence is that of Hainantoxin-X.2 from Cyriopagopus hainanus (Chinese bird spider).